Here is a 455-residue protein sequence, read N- to C-terminus: Inactive peptidyl-prolyl cis-trans isomerase shutdown (455 aa).

The segment at 34-54 is disordered; that stretch reads SQQNHARDLGLDSDSDSDYED. Acidic residues predominate over residues 44-54; the sequence is LDSDSDSDYED. Residues 103 to 192 form the PPIase FKBP-type domain; sequence KARVSVRYSG…LFKVEVIDYS (90 aa). TPR repeat units lie at residues 218–251 and 303–336; these read AVDLHLHGKDSVKLGRYQSAATAFERAVSSLNYC and CKALFQEGRALAALGEYNLARNAYLQAQAKQPAN.

Belongs to the FKBP6 family. Interacts with Hsp83. Strongly expressed in the germline stem cells and in 16-cell cysts. Present in the germ cells throughout embryogenesis. Defects are due to derepression of transposable elements and impaired piRNA biogenesis.

The protein resides in the cytoplasm. It localises to the cytoplasmic ribonucleoprotein granule. In terms of biological role, co-chaperone required during oogenesis to repress transposable elements and prevent their mobilization, which is essential for the germline integrity. Acts via the piRNA metabolic process, which mediates the repression of transposable elements during meiosis by forming complexes composed of piRNAs and Piwi proteins and govern the methylation and subsequent repression of transposons. Acts as a co-chaperone via its interaction with Hsp83/HSP90 and is required for the biogenesis of all three piRNA major populations. This is Inactive peptidyl-prolyl cis-trans isomerase shutdown from Drosophila melanogaster (Fruit fly).